The primary structure comprises 547 residues: Chaperonin GroEL (547 aa).

Residues T30–P33, K51, D87–T91, G415, N479–A481, and D495 each bind ATP.

The protein belongs to the chaperonin (HSP60) family. As to quaternary structure, forms a cylinder of 14 subunits composed of two heptameric rings stacked back-to-back. Interacts with the co-chaperonin GroES.

Its subcellular location is the cytoplasm. It catalyses the reaction ATP + H2O + a folded polypeptide = ADP + phosphate + an unfolded polypeptide.. In terms of biological role, together with its co-chaperonin GroES, plays an essential role in assisting protein folding. The GroEL-GroES system forms a nano-cage that allows encapsulation of the non-native substrate proteins and provides a physical environment optimized to promote and accelerate protein folding. The chain is Chaperonin GroEL from Pseudomonas savastanoi pv. phaseolicola (strain 1448A / Race 6) (Pseudomonas syringae pv. phaseolicola (strain 1448A / Race 6)).